The sequence spans 277 residues: Diaminopimelate epimerase (277 aa).

Residues asparagine 13, glutamine 46, and asparagine 66 each coordinate substrate. Cysteine 75 (proton donor) is an active-site residue. Substrate is bound by residues 76–77 (GN), asparagine 160, asparagine 193, and 211–212 (ER). Cysteine 220 serves as the catalytic Proton acceptor. Position 221–222 (221–222 (GT)) interacts with substrate.

This sequence belongs to the diaminopimelate epimerase family. In terms of assembly, homodimer.

It localises to the cytoplasm. It catalyses the reaction (2S,6S)-2,6-diaminopimelate = meso-2,6-diaminopimelate. It participates in amino-acid biosynthesis; L-lysine biosynthesis via DAP pathway; DL-2,6-diaminopimelate from LL-2,6-diaminopimelate: step 1/1. Functionally, catalyzes the stereoinversion of LL-2,6-diaminopimelate (L,L-DAP) to meso-diaminopimelate (meso-DAP), a precursor of L-lysine and an essential component of the bacterial peptidoglycan. In Saccharophagus degradans (strain 2-40 / ATCC 43961 / DSM 17024), this protein is Diaminopimelate epimerase.